Reading from the N-terminus, the 148-residue chain is Arginine repressor (148 aa).

Belongs to the ArgR family.

It is found in the cytoplasm. It functions in the pathway amino-acid biosynthesis; L-arginine biosynthesis [regulation]. Functionally, regulates arginine biosynthesis genes. This Koribacter versatilis (strain Ellin345) protein is Arginine repressor.